The chain runs to 353 residues: Basic membrane protein C (353 aa).

The signal sequence occupies residues 1 to 16 (MFKRFIFITLSLLVFA). The N-palmitoyl cysteine moiety is linked to residue Cys-17. Residue Cys-17 is the site of S-diacylglycerol cysteine attachment.

The protein belongs to the BMP lipoprotein family. In terms of assembly, monomer.

It is found in the cell inner membrane. In terms of biological role, may be part of an ABC-type nucleoside uptake system involved in the purine salvage pathway. The protein is Basic membrane protein C (bmpC) of Borreliella burgdorferi (strain ATCC 35210 / DSM 4680 / CIP 102532 / B31) (Borrelia burgdorferi).